The following is a 316-amino-acid chain: Pantothenate kinase (316 aa).

An ATP-binding site is contributed by 96–103 (GSVAVGKS).

Belongs to the prokaryotic pantothenate kinase family.

It is found in the cytoplasm. It carries out the reaction (R)-pantothenate + ATP = (R)-4'-phosphopantothenate + ADP + H(+). The protein operates within cofactor biosynthesis; coenzyme A biosynthesis; CoA from (R)-pantothenate: step 1/5. This chain is Pantothenate kinase, found in Shouchella clausii (strain KSM-K16) (Alkalihalobacillus clausii).